Here is a 272-residue protein sequence, read N- to C-terminus: NADPH-dependent 7-cyano-7-deazaguanine reductase (272 aa).

82-84 (IES) provides a ligand contact to substrate. An NADPH-binding site is contributed by 84–85 (SK). The active-site Thioimide intermediate is C178. D185 functions as the Proton donor in the catalytic mechanism. A substrate-binding site is contributed by 217-218 (HE). An NADPH-binding site is contributed by 246-247 (RG).

This sequence belongs to the GTP cyclohydrolase I family. QueF type 2 subfamily. In terms of assembly, homodimer.

It localises to the cytoplasm. The catalysed reaction is 7-aminomethyl-7-carbaguanine + 2 NADP(+) = 7-cyano-7-deazaguanine + 2 NADPH + 3 H(+). The protein operates within tRNA modification; tRNA-queuosine biosynthesis. In terms of biological role, catalyzes the NADPH-dependent reduction of 7-cyano-7-deazaguanine (preQ0) to 7-aminomethyl-7-deazaguanine (preQ1). The chain is NADPH-dependent 7-cyano-7-deazaguanine reductase from Stenotrophomonas maltophilia (strain R551-3).